A 448-amino-acid chain; its full sequence is MPLLIVAIGIVALLLLIMGLKLNTFVSLIIVSFGVALALGMPLDDIVKTIEEGLGGTLGHIALIFGLGAMLGRLIADSGGAQRIAMTLVNKFGEENIQWAVVIASFIIGVALFFEVALVLLIPIVFAISKELEISISYLGIPMTAALSVTHGFLPPHPGPTAIAGELGANIGEVLLYGIIVAIPTVLLAGPLFTKLAKKIVPQSFEKMGSIASLGEQKTFKLEETPGFGISVFTAMLPVIIMSISTVITLIQETMGLADNSLLAAVRLIGNASTSMVISLLVAIYTMGIARKIPIKQVMDSCSTAITQIGMMLLIIGGGGAFKQVLINGGVGDYVAELFKGTAMSPILLAWVIAAILRISLGSATVAALSTTGLVLPMLGQSDVNLALVVLATGAGSVIASHVNDAGFWMFKEYFGLSMKETFATWTLLETIIAVAGLGFTLLLSLFV.

The next 12 helical transmembrane spans lie at 2–22 (PLLI…GLKL), 23–43 (NTFV…GMPL), 52–72 (EGLG…AMLG), 106–126 (FIIG…PIVF), 134–154 (ISIS…HGFL), 174–194 (VLLY…PLFT), 228–248 (FGIS…STVI), 269–289 (IGNA…TMGI), 302–322 (CSTA…GGAF), 347–367 (ILLA…ATVA), 373–393 (GLVL…VLAT), and 428–448 (LLET…SLFV).

This sequence belongs to the GntP permease family.

The protein localises to the cell membrane. It participates in carbohydrate acid metabolism; D-gluconate degradation. The protein is Gluconate permease (gntP) of Bacillus licheniformis.